We begin with the raw amino-acid sequence, 412 residues long: Probable tRNA pseudouridine synthase D (412 aa).

Residue aspartate 97 is the Nucleophile of the active site. The TRUD domain maps to alanine 167–threonine 370.

Belongs to the pseudouridine synthase TruD family.

The enzyme catalyses uridine(13) in tRNA = pseudouridine(13) in tRNA. In terms of biological role, could be responsible for synthesis of pseudouridine from uracil-13 in transfer RNAs. The protein is Probable tRNA pseudouridine synthase D of Pyrobaculum islandicum (strain DSM 4184 / JCM 9189 / GEO3).